The chain runs to 360 residues: Phenylalanine--tRNA ligase alpha subunit (360 aa).

Position 260 (E260) interacts with Mg(2+).

This sequence belongs to the class-II aminoacyl-tRNA synthetase family. Phe-tRNA synthetase alpha subunit type 1 subfamily. In terms of assembly, tetramer of two alpha and two beta subunits. The cofactor is Mg(2+).

It localises to the cytoplasm. The catalysed reaction is tRNA(Phe) + L-phenylalanine + ATP = L-phenylalanyl-tRNA(Phe) + AMP + diphosphate + H(+). The protein is Phenylalanine--tRNA ligase alpha subunit of Bradyrhizobium diazoefficiens (strain JCM 10833 / BCRC 13528 / IAM 13628 / NBRC 14792 / USDA 110).